The sequence spans 375 residues: Protein NDRG3 (375 aa).

Residues 326-375 are disordered; the sequence is RSRTHSASSSGSMEIPRSRSHTSNAQLKSSSNNSLSNQIQETPQTIELSC. Low complexity predominate over residues 348 to 363; it reads SNAQLKSSSNNSLSNQ. Over residues 364–375 the composition is skewed to polar residues; sequence IQETPQTIELSC.

This sequence belongs to the NDRG family.

The sequence is that of Protein NDRG3 from Xenopus laevis (African clawed frog).